We begin with the raw amino-acid sequence, 224 residues long: Deoxyribose-phosphate aldolase (224 aa).

The active-site Proton donor/acceptor is aspartate 92. Lysine 154 acts as the Schiff-base intermediate with acetaldehyde in catalysis. Catalysis depends on lysine 183, which acts as the Proton donor/acceptor.

Belongs to the DeoC/FbaB aldolase family. DeoC type 1 subfamily.

Its subcellular location is the cytoplasm. It catalyses the reaction 2-deoxy-D-ribose 5-phosphate = D-glyceraldehyde 3-phosphate + acetaldehyde. It functions in the pathway carbohydrate degradation; 2-deoxy-D-ribose 1-phosphate degradation; D-glyceraldehyde 3-phosphate and acetaldehyde from 2-deoxy-alpha-D-ribose 1-phosphate: step 2/2. Functionally, catalyzes a reversible aldol reaction between acetaldehyde and D-glyceraldehyde 3-phosphate to generate 2-deoxy-D-ribose 5-phosphate. The chain is Deoxyribose-phosphate aldolase from Mannheimia succiniciproducens (strain KCTC 0769BP / MBEL55E).